We begin with the raw amino-acid sequence, 75 residues long: UPF0352 protein ETA_12580 (75 aa).

It belongs to the UPF0352 family.

In Erwinia tasmaniensis (strain DSM 17950 / CFBP 7177 / CIP 109463 / NCPPB 4357 / Et1/99), this protein is UPF0352 protein ETA_12580.